Reading from the N-terminus, the 1841-residue chain is Sucrase-isomaltase, intestinal (1841 aa).

Topologically, residues 1 to 12 (MAKKKFSALEIS) are cytoplasmic. Ser-7 carries the phosphoserine; by PKA modification. The chain crosses the membrane as a helical; Signal-anchor for type II membrane protein span at residues 13-32 (LIVLFIIVTAIAIALVTVLA). Residues 33-1841 (TKVPAVEEIK…LDEPIQITWS (1809 aa)) are Lumenal-facing. A disordered region spans residues 42–81 (KSPTPTSNSTPTSTPTSTSTPTSTSTPSPGKCPPEQGEPI). Over residues 43-70 (SPTPTSNSTPTSTPTSTSTPTSTSTPSP) the composition is skewed to low complexity. The region spanning 71–120 (GKCPPEQGEPINERINCIPEQHPTKAICEERGCCWRPWNNTVIPWCFFAD) is the P-type 1 domain. Intrachain disulfides connect Cys-73/Cys-104, Cys-87/Cys-103, and Cys-98/Cys-116. A glycan (N-linked (GlcNAc...) asparagine) is linked at Asn-109. An isomaltase region spans residues 120–1013 (DNHGYNAESI…ELQLNPPNAR (894 aa)). The substrate site is built by Asp-274 and Asp-398. Sulfotyrosine occurs at positions 401 and 410. N-linked (GlcNAc...) asparagine glycosylation is present at Asn-464. Asp-514 serves as the catalytic Nucleophile; for isomaltase activity. Arg-599 contacts substrate. Residue Asp-615 is the For isomaltase activity of the active site. A disulfide bond links Cys-646 and Cys-657. His-673 contacts substrate. 4 N-linked (GlcNAc...) asparagine glycosylation sites follow: Asn-758, Asn-765, Asn-867, and Asn-910. Residues 936–984 (RWCRTFSDNEKFTCYPDVGTATEGTCTQRGCLWQPVSGLSNVPPYYFPP) enclose the P-type 2 domain. The segment at 1014 to 1841 (IKLPSNPIST…LDEPIQITWS (828 aa)) is sucrase. Residues Asn-1240, Asn-1308, Asn-1345, Asn-1359, and Asn-1373 are each glycosylated (N-linked (GlcNAc...) asparagine). Tyr-1387 carries the post-translational modification Sulfotyrosine. The active-site Nucleophile; for sucrase activity is the Asp-1399. The active-site For sucrase activity is the Glu-1402. N-linked (GlcNAc...) asparagine glycosylation occurs at Asn-1485. The active-site Proton donor; for sucrase activity is Asp-1512. N-linked (GlcNAc...) asparagine glycans are attached at residues Asn-1513, Asn-1575, Asn-1762, and Asn-1829.

This sequence belongs to the glycosyl hydrolase 31 family. In terms of assembly, the resulting sucrase and isomaltase subunits stay associated with one another in a complex by non-covalent linkages. The precursor is proteolytically cleaved when exposed to pancreatic proteases in the intestinal lumen. Post-translationally, sulfated.

It is found in the apical cell membrane. It carries out the reaction Hydrolysis of sucrose and maltose by an alpha-D-glucosidase-type action.. The catalysed reaction is Hydrolysis of (1-&gt;6)-alpha-D-glucosidic linkages in some oligosaccharides produced from starch and glycogen by alpha-amylase, and in isomaltose.. Its function is as follows. Plays an important role in the final stage of carbohydrate digestion. Isomaltase activity is specific for both alpha-1,4- and alpha-1,6-oligosaccharides. This chain is Sucrase-isomaltase, intestinal (Si), found in Rattus norvegicus (Rat).